The chain runs to 132 residues: Small ribosomal subunit protein uS8 (132 aa).

The protein belongs to the universal ribosomal protein uS8 family. As to quaternary structure, part of the 30S ribosomal subunit. Contacts proteins S5 and S12.

Its function is as follows. One of the primary rRNA binding proteins, it binds directly to 16S rRNA central domain where it helps coordinate assembly of the platform of the 30S subunit. The sequence is that of Small ribosomal subunit protein uS8 from Corynebacterium kroppenstedtii (strain DSM 44385 / JCM 11950 / CIP 105744 / CCUG 35717).